The primary structure comprises 242 residues: MSPKYRRVLLKLSGEALMGNLNYGIDPKVVQSFASEIAQVVQAGVQTAIVVGGGNIFRGMKGAAAGMDRATADYIGMIATVMNAMTLQDALEQMNVPTRVQTAIAMQEVAEPYIRRRAIRHLEKGRVVIFGAGSGNPFFTTDTTAALRAAEIDAEVIFKATKVDGVYDADPHTHPNARRYRSLTYTHALTHNLAVMDSTAIALCKDNDIPIIVFSLETAGNIYRALTGEPIGTMVGGSCEIS.

11 to 14 (KLSG) is an ATP binding site. Residue Gly-53 coordinates UMP. Positions 54 and 58 each coordinate ATP. UMP-binding positions include Asp-73 and 134 to 141 (SGNPFFTT). Residues Thr-161, Tyr-167, and Asp-170 each coordinate ATP.

It belongs to the UMP kinase family. Homohexamer.

Its subcellular location is the cytoplasm. The enzyme catalyses UMP + ATP = UDP + ADP. Its pathway is pyrimidine metabolism; CTP biosynthesis via de novo pathway; UDP from UMP (UMPK route): step 1/1. Inhibited by UTP. Catalyzes the reversible phosphorylation of UMP to UDP. The sequence is that of Uridylate kinase from Thermosynechococcus vestitus (strain NIES-2133 / IAM M-273 / BP-1).